The chain runs to 241 residues: Small ribosomal subunit protein bS6 (241 aa).

Over residues 97–108 the composition is skewed to basic residues; the sequence is KPKIRERNRKYT. The tract at residues 97–241 is disordered; sequence KPKIRERNRK…YNNKKPQSSN (145 aa). The segment covering 109–118 has biased composition (basic and acidic residues); it reads LRRDRFDKPN. Composition is skewed to low complexity over residues 130–151 and 161–182; these read QDQQATKNQQNFQQNQQNQASQ and DDFQQVSSNQQNFGQNQQNQSG. Basic and acidic residues predominate over residues 183-193; it reads YHRENNRHNQE. Low complexity predominate over residues 194 to 210; that stretch reads NMHQNNKNHQNQTSQTQ.

Belongs to the bacterial ribosomal protein bS6 family.

Its function is as follows. Binds together with bS18 to 16S ribosomal RNA. This chain is Small ribosomal subunit protein bS6, found in Mesomycoplasma hyopneumoniae (strain J / ATCC 25934 / NCTC 10110) (Mycoplasma hyopneumoniae).